The following is a 164-amino-acid chain: Large ribosomal subunit protein bL9 (164 aa).

This sequence belongs to the bacterial ribosomal protein bL9 family.

Binds to the 23S rRNA. The protein is Large ribosomal subunit protein bL9 of Borrelia hermsii (strain HS1 / DAH).